Consider the following 188-residue polypeptide: FMN reductase (NADH) RutF (188 aa).

The protein belongs to the non-flavoprotein flavin reductase family. RutF subfamily.

It carries out the reaction FMNH2 + NAD(+) = FMN + NADH + 2 H(+). Its function is as follows. Catalyzes the reduction of FMN to FMNH2 which is used to reduce pyrimidine by RutA via the Rut pathway. In Acinetobacter baylyi (strain ATCC 33305 / BD413 / ADP1), this protein is FMN reductase (NADH) RutF.